The sequence spans 101 residues: Small ribosomal subunit protein uS10 (101 aa).

This sequence belongs to the universal ribosomal protein uS10 family. Part of the 30S ribosomal subunit.

Its function is as follows. Involved in the binding of tRNA to the ribosomes. In Rhodococcus erythropolis (strain PR4 / NBRC 100887), this protein is Small ribosomal subunit protein uS10.